The following is a 335-amino-acid chain: PA-phosphatase related-family protein DDB_G0275547 (335 aa).

Transmembrane regions (helical) follow at residues 43 to 63 (VMYL…GILF), 93 to 113 (VLIP…SLIV), 124 to 144 (ILGL…FKCF), 202 to 222 (SITA…FKIF), 226 to 246 (GHIF…LIGI), and 254 to 274 (HTFL…LSCY).

This sequence belongs to the PA-phosphatase related phosphoesterase family.

Its subcellular location is the membrane. The protein is PA-phosphatase related-family protein DDB_G0275547 of Dictyostelium discoideum (Social amoeba).